The following is a 126-amino-acid chain: MQYMTIVAFLAATVAAGPQIRAYPSIDQITVAQANNACGNNMQVTCCNKVTNTPAGNAVGNGAGILNNLSLFDQCSKLDVNVLAIANGLLNKECQANAACCQNSGGSATGGLVNVALPCIALSSLI.

The first 16 residues, Met1–Ala16, serve as a signal peptide directing secretion. Intrachain disulfides connect Cys38–Cys100, Cys46–Cys94, Cys47–Cys75, and Cys101–Cys119.

Belongs to the fungal hydrophobin family.

It localises to the secreted. Its subcellular location is the cell wall. Functionally, aerial growth, conidiation, and dispersal of filamentous fungi in the environment rely upon a capability of their secreting small amphipathic proteins called hydrophobins (HPBs) with low sequence identity. Class I can self-assemble into an outermost layer of rodlet bundles on aerial cell surfaces, conferring cellular hydrophobicity that supports fungal growth, development and dispersal; whereas Class II form highly ordered films at water-air interfaces through intermolecular interactions but contribute nothing to the rodlet structure. HYD1 and HYD2 are required for the structural integrity of the long aerial chains of microconidia. Does not seem to be important for the ability to cause seedling disease. This is Class I hydrophobin 1 from Gibberella moniliformis (Maize ear and stalk rot fungus).